The following is a 464-amino-acid chain: Probable acid phosphatase DDB_G0284753 (464 aa).

Residues 1 to 29 (MFSYFRKSQQKVEENQNGGGGDGRGSGIK) form a disordered region. Residues 17–26 (NGGGGDGRGS) are compositionally biased toward gly residues. The active-site Nucleophile is His81. Residues 180 to 202 (SFTDEQEKSPHHSSFLVKPDNEE) are disordered. The active-site Proton donor is the Asp347.

It belongs to the histidine acid phosphatase family.

The catalysed reaction is a phosphate monoester + H2O = an alcohol + phosphate. The polypeptide is Probable acid phosphatase DDB_G0284753 (Dictyostelium discoideum (Social amoeba)).